The sequence spans 275 residues: Voltage-dependent calcium channel gamma-5 subunit (275 aa).

The next 4 membrane-spanning stretches (helical) occupy residues 8 to 28 (ALTL…GIAV), 103 to 123 (FPLV…IGHI), 129 to 149 (ILAF…VVGL), and 181 to 201 (FAAI…YLFM).

Belongs to the PMP-22/EMP/MP20 family. CACNG subfamily. In terms of assembly, the L-type calcium channel is composed of five subunits: alpha-1, alpha-2/delta, beta and gamma. Acts as an auxiliary subunit for AMPA-selective glutamate receptors (AMPARs). Found in a complex with GRIA1, GRIA2, GRIA3, GRIA4, CNIH2, CNIH3, CACNG2, CACNG3, CACNG4, CACNG7 and CACNG8. Interacts with GRIA1, GRIA2, GRIA3 and GRIA4. Brain. Enriched in Bergman glia, as well as a variety of neuronal populations including locus coeruleus, olfactory bulb, lateral septal nucleus, interpeduncular nucleus, and the CA2 and rostral/medial CA1 regions of hippocampus.

Its subcellular location is the membrane. It localises to the postsynaptic density membrane. In terms of biological role, regulates the gating properties of AMPA-selective glutamate receptors (AMPARs). Modulates their gating properties by accelerating their rates of activation, deactivation and desensitization. Displays subunit-specific AMPA receptor regulation. Shows specificity for GRIA1, GRIA4 and the long isoform of GRIA2. Thought to stabilize the calcium channel in an inactivated (closed) state. The polypeptide is Voltage-dependent calcium channel gamma-5 subunit (Cacng5) (Mus musculus (Mouse)).